Consider the following 528-residue polypeptide: Glucose-6-phosphate isomerase (528 aa).

The Proton donor role is filled by Glu322. Residues His351 and Lys455 contribute to the active site.

Belongs to the GPI family.

The protein resides in the cytoplasm. The enzyme catalyses alpha-D-glucose 6-phosphate = beta-D-fructose 6-phosphate. The protein operates within carbohydrate biosynthesis; gluconeogenesis. Its pathway is carbohydrate degradation; glycolysis; D-glyceraldehyde 3-phosphate and glycerone phosphate from D-glucose: step 2/4. Functionally, catalyzes the reversible isomerization of glucose-6-phosphate to fructose-6-phosphate. This chain is Glucose-6-phosphate isomerase, found in Trichormus variabilis (strain ATCC 29413 / PCC 7937) (Anabaena variabilis).